The following is a 279-amino-acid chain: Proteasome subunit beta (279 aa).

The propeptide at 1 to 56 is removed in mature form; by autocatalysis; the sequence is MASQAMSWRGEGERVVRDLAAASTSSFVEHLSQSRPDLLPFGQALPAGVLPQTPHA. The Nucleophile role is filled by Thr57.

It belongs to the peptidase T1B family. In terms of assembly, the 20S proteasome core is composed of 14 alpha and 14 beta subunits that assemble into four stacked heptameric rings, resulting in a barrel-shaped structure. The two inner rings, each composed of seven catalytic beta subunits, are sandwiched by two outer rings, each composed of seven alpha subunits. The catalytic chamber with the active sites is on the inside of the barrel. Has a gated structure, the ends of the cylinder being occluded by the N-termini of the alpha-subunits. Is capped by the proteasome-associated ATPase, ARC.

The protein resides in the cytoplasm. It catalyses the reaction Cleavage of peptide bonds with very broad specificity.. Its pathway is protein degradation; proteasomal Pup-dependent pathway. Its activity is regulated as follows. The formation of the proteasomal ATPase ARC-20S proteasome complex, likely via the docking of the C-termini of ARC into the intersubunit pockets in the alpha-rings, may trigger opening of the gate for substrate entry. Interconversion between the open-gate and close-gate conformations leads to a dynamic regulation of the 20S proteasome proteolysis activity. Its function is as follows. Component of the proteasome core, a large protease complex with broad specificity involved in protein degradation. The protein is Proteasome subunit beta of Renibacterium salmoninarum (strain ATCC 33209 / DSM 20767 / JCM 11484 / NBRC 15589 / NCIMB 2235).